The sequence spans 325 residues: Acetyl-coenzyme A carboxylase carboxyl transferase subunit alpha (325 aa).

Residues 38–292 (RLEERLSKLQ…DGILKETLKS (255 aa)) enclose the CoA carboxyltransferase C-terminal domain.

It belongs to the AccA family. As to quaternary structure, acetyl-CoA carboxylase is a heterohexamer composed of biotin carboxyl carrier protein (AccB), biotin carboxylase (AccC) and two subunits each of ACCase subunit alpha (AccA) and ACCase subunit beta (AccD).

It localises to the cytoplasm. It catalyses the reaction N(6)-carboxybiotinyl-L-lysyl-[protein] + acetyl-CoA = N(6)-biotinyl-L-lysyl-[protein] + malonyl-CoA. Its pathway is lipid metabolism; malonyl-CoA biosynthesis; malonyl-CoA from acetyl-CoA: step 1/1. Component of the acetyl coenzyme A carboxylase (ACC) complex. First, biotin carboxylase catalyzes the carboxylation of biotin on its carrier protein (BCCP) and then the CO(2) group is transferred by the carboxyltransferase to acetyl-CoA to form malonyl-CoA. The chain is Acetyl-coenzyme A carboxylase carboxyl transferase subunit alpha from Bacillus velezensis (strain DSM 23117 / BGSC 10A6 / LMG 26770 / FZB42) (Bacillus amyloliquefaciens subsp. plantarum).